A 225-amino-acid polypeptide reads, in one-letter code: Testis-expressed protein 30 (225 aa).

The polypeptide is Testis-expressed protein 30 (Tex30) (Mus musculus (Mouse)).